An 84-amino-acid chain; its full sequence is U4-theraphotoxin-Hhn1a (84 aa).

The signal sequence occupies residues 1–22 (MKVTLIAILTCAAVLVLHTTAA). Residues 23–47 (EELEESQLMEVGMPDTELAAVDEER) constitute a propeptide that is removed on maturation. 3 disulfide bridges follow: cysteine 51–cysteine 65, cysteine 55–cysteine 76, and cysteine 70–cysteine 81.

This sequence belongs to the neurotoxin 12 (Hwtx-2) family. 02 (Hwtx-2) subfamily. As to expression, expressed by the venom gland.

The protein localises to the secreted. Functionally, postsynaptic neurotoxin. The protein is U4-theraphotoxin-Hhn1a of Cyriopagopus hainanus (Chinese bird spider).